A 214-amino-acid polypeptide reads, in one-letter code: Acetoin utilization protein AcuB (214 aa).

2 consecutive CBS domains span residues 7–66 (MKRD…ENKR) and 78–135 (MKKD…GADQ).

In terms of assembly, interacts with YabA.

The protein operates within ketone degradation; acetoin degradation. Its function is as follows. Role in growth and sporulation on acetoin or butanediol. Involved in the breakdown of these compounds used as a carbon source. This is Acetoin utilization protein AcuB (acuB) from Bacillus subtilis (strain 168).